Reading from the N-terminus, the 406-residue chain is (R)-benzylsuccinyl-CoA dehydrogenase (406 aa).

The protein belongs to the acyl-CoA dehydrogenase family. In terms of assembly, homotetramer. FAD serves as cofactor.

The enzyme catalyses (R)-2-benzylsuccinyl-CoA + oxidized [electron-transfer flavoprotein] + H(+) = (E)-2-benzylidenesuccinyl-CoA + reduced [electron-transfer flavoprotein]. Its pathway is xenobiotic degradation; toluene degradation. With respect to regulation, inhibited by (S)-benzylsuccinyl-CoA. Functionally, catalyzes the oxidation of benzylsuccinyl-CoA to benzylidenesuccinyl-CoA. This Thauera aromatica protein is (R)-benzylsuccinyl-CoA dehydrogenase (bbsG).